We begin with the raw amino-acid sequence, 470 residues long: Argininosuccinate lyase (470 aa).

The protein belongs to the lyase 1 family. Argininosuccinate lyase subfamily.

The protein localises to the cytoplasm. It carries out the reaction 2-(N(omega)-L-arginino)succinate = fumarate + L-arginine. It functions in the pathway amino-acid biosynthesis; L-arginine biosynthesis; L-arginine from L-ornithine and carbamoyl phosphate: step 3/3. The sequence is that of Argininosuccinate lyase from Leptospira borgpetersenii serovar Hardjo-bovis (strain JB197).